Reading from the N-terminus, the 156-residue chain is Small ribosomal subunit protein uS7 (156 aa).

The protein belongs to the universal ribosomal protein uS7 family. Part of the 30S ribosomal subunit. Contacts proteins S9 and S11.

One of the primary rRNA binding proteins, it binds directly to 16S rRNA where it nucleates assembly of the head domain of the 30S subunit. Is located at the subunit interface close to the decoding center, probably blocks exit of the E-site tRNA. This chain is Small ribosomal subunit protein uS7, found in Anaeromyxobacter dehalogenans (strain 2CP-1 / ATCC BAA-258).